Consider the following 312-residue polypeptide: Secreted RxLR effector protein 14 (312 aa).

Positions 1–20 are cleaved as a signal peptide; sequence MHSFKLLLALIVAICTSCDA. The short motif at 46 to 61 is the RxLR-dEER element; it reads RLLRAKDGKVRADEER.

Belongs to the RxLR effector family.

It is found in the secreted. It localises to the host nucleus. In terms of biological role, secreted effector that completely suppresses the host cell death induced by cell death-inducing proteins. In Plasmopara viticola (Downy mildew of grapevine), this protein is Secreted RxLR effector protein 14.